A 77-amino-acid polypeptide reads, in one-letter code: Conotoxin Vc6.14 (77 aa).

Positions M1 to A19 are cleaved as a signal peptide. The propeptide occupies M20–S37. Disulfide bonds link C51–C65, C58–C69, and C64–C74.

Belongs to the conotoxin O2 superfamily. In terms of tissue distribution, expressed by the venom duct.

The protein resides in the secreted. Its function is as follows. Inhibits voltage-gated ion channels. The polypeptide is Conotoxin Vc6.14 (Conus victoriae (Queen Victoria cone)).